The chain runs to 183 residues: ATP synthase subunit b 2 (183 aa).

Residues 27-47 (PSFYAFLALLIFFGLLLHMGV) form a helical membrane-spanning segment.

Belongs to the ATPase B chain family. As to quaternary structure, F-type ATPases have 2 components, F(1) - the catalytic core - and F(0) - the membrane proton channel. F(1) has five subunits: alpha(3), beta(3), gamma(1), delta(1), epsilon(1). F(0) has three main subunits: a(1), b(2) and c(10-14). The alpha and beta chains form an alternating ring which encloses part of the gamma chain. F(1) is attached to F(0) by a central stalk formed by the gamma and epsilon chains, while a peripheral stalk is formed by the delta and b chains.

The protein localises to the cell inner membrane. F(1)F(0) ATP synthase produces ATP from ADP in the presence of a proton or sodium gradient. F-type ATPases consist of two structural domains, F(1) containing the extramembraneous catalytic core and F(0) containing the membrane proton channel, linked together by a central stalk and a peripheral stalk. During catalysis, ATP synthesis in the catalytic domain of F(1) is coupled via a rotary mechanism of the central stalk subunits to proton translocation. Its function is as follows. Component of the F(0) channel, it forms part of the peripheral stalk, linking F(1) to F(0). The sequence is that of ATP synthase subunit b 2 from Maricaulis maris (strain MCS10) (Caulobacter maris).